Reading from the N-terminus, the 350-residue chain is MERYDILRDLGSGNFGVAKLVREKANGEFYAVKYIERGLKIDEHVQREIINHRDLKHPNIIRFKEVFVTPTHLAIVMEYAAGGELFERICNAGRFSEDEGRYYFKQLISGVSYCHAMQICHRDLKLENTLLDGSPSSHLKICDFGYSKSSVLHSQPKSTVGTPAYVAPEVLSRKEYNGKIADVWSCGVTLYVMLVGAYPFEDPEDPRNIRNTIQRILSVHYTIPDYVRISSECKHLLSRIFVADPDKRITVPEIEKHPWFLKGPLVVPPEEEKCDNGVEEEEEEEEKCRQSVEEIVKIIEEARKGVNGTDNNGGLGLIDGSIDLDDIDDADIYDDVDDDEERNGDFVCAL.

A Protein kinase domain is found at 4-260; that stretch reads YDILRDLGSG…VPEIEKHPWF (257 aa). Residues 10 to 18 and K33 each bind ATP; that span reads LGSGNFGVA. D123 serves as the catalytic Proton acceptor. A coiled-coil region spans residues 270 to 303; that stretch reads EEEKCDNGVEEEEEEEEKCRQSVEEIVKIIEEAR.

This sequence belongs to the protein kinase superfamily. Ser/Thr protein kinase family. In terms of tissue distribution, expressed in seedlings.

It catalyses the reaction L-seryl-[protein] + ATP = O-phospho-L-seryl-[protein] + ADP + H(+). It carries out the reaction L-threonyl-[protein] + ATP = O-phospho-L-threonyl-[protein] + ADP + H(+). This Arabidopsis thaliana (Mouse-ear cress) protein is Serine/threonine-protein kinase SRK2F (SRK2F).